Reading from the N-terminus, the 118-residue chain is MESVALYSFQATESDELAFNKGDTLKILNMEDDQNWYKAELRGVEGFIPKNYIRVKPHPWYSGRISRQLAEEILMKRNHLGAFLIRESESSPGEFSVSVNNRAQRGPCLGPKSHSRLG.

One can recognise an SH3 domain in the interval 1–58 (MESVALYSFQATESDELAFNKGDTLKILNMEDDQNWYKAELRGVEGFIPKNYIRVKPH). In terms of domain architecture, SH2 spans 60–118 (WYSGRISRQLAEEILMKRNHLGAFLIRESESSPGEFSVSVNNRAQRGPCLGPKSHSRLG). Positions 89–118 (ESSPGEFSVSVNNRAQRGPCLGPKSHSRLG) are disordered. Residues 90–103 (SSPGEFSVSVNNRA) are compositionally biased toward polar residues.

The protein belongs to the GRB2/sem-5/DRK family.

This is GRB2-related adapter protein-like (GRAPL) from Homo sapiens (Human).